A 200-amino-acid chain; its full sequence is Casparian strip membrane protein 1 (200 aa).

The Cytoplasmic portion of the chain corresponds to 1–38; the sequence is MKSGDHAAIDVPESSAVAKGKAPLIATPREQKSGFKKG. A helical transmembrane segment spans residues 39–59; sequence LGIFDFLLRLGAIIAALAAAA. Over 60 to 86 the chain is Extracellular; that stretch reads TMGTSDETLPFFTQFFQFEASYDDLPT. A helical membrane pass occupies residues 87 to 107; sequence FMFFVIAMALIGGYLVLSLPF. Over 108-121 the chain is Cytoplasmic; it reads SIVTIVRPHAVAPR. Residues 122-142 traverse the membrane as a helical segment; it reads LLLFILDIVALTLTTAAGAAA. Residues 143–171 are Extracellular-facing; the sequence is AAIVYLAHNGNPNTNWLAICQQFGDFCQE. The helical transmembrane segment at 172 to 192 threads the bilayer; the sequence is VSGAVVASFVTVVVLMSLVLL. The Cytoplasmic segment spans residues 193–200; it reads SGVALKKH.

Belongs to the Casparian strip membrane proteins (CASP) family. In terms of assembly, homodimer and heterodimers.

The protein resides in the cell membrane. Its function is as follows. Regulates membrane-cell wall junctions and localized cell wall deposition. Required for establishment of the Casparian strip membrane domain (CSD) and the subsequent formation of Casparian strips, a cell wall modification of the root endodermis that determines an apoplastic barrier between the intraorganismal apoplasm and the extraorganismal apoplasm and prevents lateral diffusion. The polypeptide is Casparian strip membrane protein 1 (Theobroma cacao (Cacao)).